A 448-amino-acid polypeptide reads, in one-letter code: Tryptophan dimethylallyltransferase 2 (448 aa).

L-tryptophan contacts are provided by residues 80-81 (IL) and Glu-89. The substrate site is built by Arg-100, Lys-186, and Tyr-188. 2 residues coordinate L-tryptophan: Tyr-190 and Arg-249. Substrate-binding residues include Arg-262, Lys-264, Tyr-266, Gln-348, Tyr-350, Tyr-414, and Tyr-418.

This sequence belongs to the tryptophan dimethylallyltransferase family. As to quaternary structure, homodimer.

It catalyses the reaction L-tryptophan + dimethylallyl diphosphate = 4-(3-methylbut-2-enyl)-L-tryptophan + diphosphate. It participates in alkaloid biosynthesis; ergot alkaloid biosynthesis. In terms of biological role, catalyzes the first step of ergot alkaloid biosynthesis. Ergot alkaloids, which are produced by endophyte fungi, can enhance plant host fitness, but also cause livestock toxicosis to host plants. In Claviceps purpurea (strain 20.1) (Ergot fungus), this protein is Tryptophan dimethylallyltransferase 2 (dmaW2).